The sequence spans 57 residues: Small ribosomal subunit protein eS27 (57 aa).

Residues C10, C13, C29, and C32 each coordinate Zn(2+). The C4-type zinc finger occupies 10 to 32; that stretch reads CPDCENEQTVFGKASTEVACAVC.

The protein belongs to the eukaryotic ribosomal protein eS27 family. As to quaternary structure, part of the 30S ribosomal subunit. Requires Zn(2+) as cofactor.

This is Small ribosomal subunit protein eS27 from Halobacterium salinarum (strain ATCC 29341 / DSM 671 / R1).